A 595-amino-acid polypeptide reads, in one-letter code: Estrogen receptor (595 aa).

The tract at residues 1–184 is modulating (transactivation AF-1); mediates interaction with MACROD1; it reads MTMTLHTKAS…AMESAKETRY (184 aa). A glycan (O-linked (GlcNAc) serine) is linked at serine 10. Residues 35-47 form a required for interaction with NCOA1 region; the sequence is LERPLGEVYVDSS. Residues 35-174 form an interaction with DDX5; self-association region; sequence LERPLGEVYV…LASTSDKGSM (140 aa). A phosphoserine; by CDK2 mark is found at serine 104 and serine 106. Position 118 is a phosphoserine (serine 118). The disordered stretch occupies residues 144 to 174; sequence AGPPAFYRPNSDNRRQGGRERLASTSDKGSM. Residues 154–165 show a composition bias toward basic and acidic residues; sequence SDNRRQGGRERL. Residue serine 167 is modified to Phosphoserine; by CK2. 2 consecutive NR C4-type zinc fingers follow at residues 185-205 and 221-245; these read CAVC…CEGC and CPAT…LRKC. Residues 185 to 250 constitute a DNA-binding region (nuclear receptor); sequence CAVCNDYASG…RLRKCYEVGM (66 aa). Residues 185-310 form a mediates interaction with DNTTIP2 region; the sequence is CAVCNDYASG…TKKNSPVLSL (126 aa). The interval 251–310 is hinge; sequence MKGGIRKDRRGGRMLKHKRQRDDGEGRNEAVPPGDMRSANLWPSPLLIKHTKKNSPVLSL. The span at 257-269 shows a compositional bias: basic residues; that stretch reads KDRRGGRMLKHKR. The tract at residues 257-288 is disordered; it reads KDRRGGRMLKHKRQRDDGEGRNEAVPPGDMRS. Arginine 260 carries the post-translational modification Asymmetric dimethylarginine; by PRMT1. The tract at residues 262–595 is interaction with AKAP13; it reads GRMLKHKRQR…GEAENFPTTI (334 aa). Residues 264-594 are self-association; the sequence is MLKHKRQRDD…TGEAENFPTT (331 aa). The NR LBD domain maps to 311 to 547; sequence TADQMISALL…DLLLEMLDAH (237 aa). Positions 311–594 are transactivation AF-2; sequence TADQMISALL…TGEAENFPTT (284 aa). Glutamate 353 and arginine 394 together coordinate 17beta-estradiol. Cysteine 447 is lipidated: S-palmitoyl cysteine. Histidine 524 lines the 17beta-estradiol pocket. Tyrosine 537 is modified (phosphotyrosine; by Tyr-kinases). Residues 551-575 form a disordered region; sequence APTNLGGPPPEDMSQSQLATSGSTP. Residues 563 to 575 are compositionally biased toward polar residues; the sequence is MSQSQLATSGSTP.

This sequence belongs to the nuclear hormone receptor family. NR3 subfamily. Binds DNA as a homodimer. Can form a heterodimer with ESR2. Interacts with coactivator NCOA5. Interacts with PELP1, the interaction is enhanced by 17-beta-estradiol; the interaction increases ESR1 transcriptional activity. Interacts with NCOA7; the interaction is ligand-inducible. Interacts with AKAP13, CUEDC2, HEXIM1, KDM5A, MAP1S, SMARD1, and UBE1C. Interacts with MUC1; the interaction is stimulated by 7 beta-estradiol (E2) and enhances ESR1-mediated transcription. Interacts with DNTTIP2, and UIMC1. Interacts with KMT2D/MLL2. Interacts with ATAD2; the interaction is enhanced by estradiol. Interacts with KIF18A and LDB1. Interacts with RLIM (via its C-terminus). Interacts with MACROD1. Interacts with SH2D4A and PLCG. Interacts with SH2D4A; the interaction blocks binding to PLCG and inhibits estrogen-induced cell proliferation. Interacts with DYNLL1. Interacts with CCDC62; the interaction requires estradiol and appears to enhance the transcription of target genes. Interacts with NR2C1; the interaction prevents homodimerization of ESR1 and suppresses its transcriptional activity and cell growth. Interacts with DNAAF4. Interacts with PRMT2. Interacts with RBFOX2. Interacts with EP300; the interaction is estrogen-dependent and enhanced by CITED1. Interacts with CITED1; the interaction is estrogen-dependent. Interacts with FAM120B, FOXL2, PHB2 and SLC30A9. Interacts with coactivators NCOA3 and NCOA6. Interacts with STK3/MST2 only in the presence of SAV1 and vice-versa. Binds to CSNK1D. Interacts with NCOA2; NCOA2 can interact with ESR1 AF-1 and AF-2 domains simultaneously and mediate their transcriptional synergy. Interacts with DDX5. Interacts with NCOA1; the interaction seems to require a self-association of N-terminal and C-terminal regions. Interacts with ZNF366, DDX17, NFKB1, RELA, SP1 and SP3. Interacts with NRIP1. Interacts with GPER1; the interaction occurs in an estrogen-dependent manner. Interacts with CLOCK and the interaction is stimulated by estrogen. Interacts with TRIP4 (ufmylated); estrogen dependent. Interacts with LMTK3; the interaction phosphorylates ESR1 (in vitro) and protects it against proteasomal degradation. Interacts with CCAR2 (via N-terminus) in a ligand-independent manner. Interacts with ZFHX3. Interacts with SFR1 in a ligand-dependent and -independent manner. Interacts with DCAF13, LATS1 and DCAF1; regulates ESR1 ubiquitination and ubiquitin-mediated proteasomal degradation. Interacts (via DNA-binding domain) with POU4F2 (C-terminus); this interaction increases the estrogen receptor ESR1 transcriptional activity in a DNA- and ligand 17-beta-estradiol-independent manner. Interacts with ESRRB isoform 1. Interacts with UBE3A and WBP2. Interacts with GTF2B. Interacts with RBM39. In the absence of hormonal ligand, interacts with TACC1. Interacts with PI3KR1 or PI3KR2 and PTK2/FAK1. Interacts with SRC. Interacts with BAG1; the interaction is promoted in the absence of estradiol (17-beta-estradiol/E2). Interacts with and ubiquitinated by STUB1; the interaction is promoted in the absence of estradiol (17-beta-estradiol/E2). Interacts with NEDD8. Phosphorylated by cyclin A/CDK2 and CK1. Phosphorylation probably enhances transcriptional activity. Dephosphorylation at Ser-118 by PPP5C inhibits its transactivation activity. Phosphorylated by LMTK3 (in vitro). In terms of processing, ubiquitinated; regulated by LATS1 via DCAF1 it leads to ESR1 proteasomal degradation. Deubiquitinated by OTUB1. Ubiquitinated by STUB1/CHIP; in the CA1 hippocampal region following loss of endogenous circulating estradiol (17-beta-estradiol/E2). Ubiquitinated by UBR5, leading to its degradation: UBR5 specifically recognizes and binds ligand-bound ESR1 when it is not associated with coactivators (NCOAs). In presence of NCOAs, the UBR5-degron is not accessible, preventing its ubiquitination and degradation. Post-translationally, palmitoylated at Cys-447 by ZDHHC7 and ZDHHC21. Palmitoylation is required for plasma membrane targeting and for rapid intracellular signaling via ERK and AKT kinases and cAMP generation, but not for signaling mediated by the nuclear hormone receptor. Dimethylated by PRMT1 at Arg-260. The methylation may favor cytoplasmic localization. Demethylated by JMJD6 at Arg-260.

It is found in the nucleus. The protein resides in the cytoplasm. It localises to the golgi apparatus. Its subcellular location is the cell membrane. Its function is as follows. Nuclear hormone receptor. The steroid hormones and their receptors are involved in the regulation of eukaryotic gene expression and affect cellular proliferation and differentiation in target tissues. Ligand-dependent nuclear transactivation involves either direct homodimer binding to a palindromic estrogen response element (ERE) sequence or association with other DNA-binding transcription factors, such as AP-1/c-Jun, c-Fos, ATF-2, Sp1 and Sp3, to mediate ERE-independent signaling. Ligand binding induces a conformational change allowing subsequent or combinatorial association with multiprotein coactivator complexes through LXXLL motifs of their respective components. Mutual transrepression occurs between the estrogen receptor (ER) and NF-kappa-B in a cell-type specific manner. Decreases NF-kappa-B DNA-binding activity and inhibits NF-kappa-B-mediated transcription from the IL6 promoter and displace RELA/p65 and associated coregulators from the promoter. Recruited to the NF-kappa-B response element of the CCL2 and IL8 promoters and can displace CREBBP. Present with NF-kappa-B components RELA/p65 and NFKB1/p50 on ERE sequences. Can also act synergistically with NF-kappa-B to activate transcription involving respective recruitment adjacent response elements; the function involves CREBBP. Can activate the transcriptional activity of TFF1. Also mediates membrane-initiated estrogen signaling involving various kinase cascades. Essential for MTA1-mediated transcriptional regulation of BRCA1 and BCAS3. Maintains neuronal survival in response to ischemic reperfusion injury when in the presence of circulating estradiol (17-beta-estradiol/E2). In Sus scrofa (Pig), this protein is Estrogen receptor (ESR1).